Here is a 382-residue protein sequence, read N- to C-terminus: Protein PEP-RELATED DEVELOPMENT ARRESTED 1 homolog, chloroplastic (382 aa).

Residues 1–44 (MAILPLSISHSLTSALSATSSGIGRPVARLLHPRVPSRPTVICL) constitute a chloroplast transit peptide.

It localises to the plastid. The protein resides in the chloroplast stroma. Its subcellular location is the chloroplast nucleoid. Its function is as follows. Plays an essential role in early steps of chloroplast development. May be involved in the redox control of plastid gene expression by maintening the redox state around chloroplast nucleoids. May positively regulate plastid-encoded RNA polymerase (PEP) activity. This chain is Protein PEP-RELATED DEVELOPMENT ARRESTED 1 homolog, chloroplastic, found in Oryza sativa subsp. japonica (Rice).